Reading from the N-terminus, the 329-residue chain is Ribosomal RNA small subunit methyltransferase C (329 aa).

It belongs to the methyltransferase superfamily. RsmC family. As to quaternary structure, monomer.

The protein resides in the cytoplasm. It catalyses the reaction guanosine(1207) in 16S rRNA + S-adenosyl-L-methionine = N(2)-methylguanosine(1207) in 16S rRNA + S-adenosyl-L-homocysteine + H(+). Functionally, specifically methylates the guanine in position 1207 of 16S rRNA in the 30S particle. The protein is Ribosomal RNA small subunit methyltransferase C of Haemophilus ducreyi (strain 35000HP / ATCC 700724).